We begin with the raw amino-acid sequence, 485 residues long: Glutamate--tRNA ligase (485 aa).

The 'HIGH' region signature appears at 11–21; the sequence is PSPTGYMHVGN. Residues Cys108, Cys110, Cys135, and Asp137 each coordinate Zn(2+). The short motif at 252 to 256 is the 'KMSKS' region element; it reads KLSKR. Lys255 lines the ATP pocket.

It belongs to the class-I aminoacyl-tRNA synthetase family. Glutamate--tRNA ligase type 1 subfamily. In terms of assembly, monomer. It depends on Zn(2+) as a cofactor.

It is found in the cytoplasm. It carries out the reaction tRNA(Glu) + L-glutamate + ATP = L-glutamyl-tRNA(Glu) + AMP + diphosphate. Functionally, catalyzes the attachment of glutamate to tRNA(Glu) in a two-step reaction: glutamate is first activated by ATP to form Glu-AMP and then transferred to the acceptor end of tRNA(Glu). In Clostridium botulinum (strain Okra / Type B1), this protein is Glutamate--tRNA ligase.